The chain runs to 277 residues: 3-methyl-2-oxobutanoate hydroxymethyltransferase (277 aa).

Mg(2+)-binding residues include Asp-54 and Asp-93. Residues 54–55 (DS), Asp-93, and Lys-122 contribute to the 3-methyl-2-oxobutanoate site. Mg(2+) is bound at residue Glu-124. The active-site Proton acceptor is the Glu-191.

It belongs to the PanB family. Homodecamer; pentamer of dimers. Mg(2+) serves as cofactor.

The protein resides in the cytoplasm. The enzyme catalyses 3-methyl-2-oxobutanoate + (6R)-5,10-methylene-5,6,7,8-tetrahydrofolate + H2O = 2-dehydropantoate + (6S)-5,6,7,8-tetrahydrofolate. It functions in the pathway cofactor biosynthesis; (R)-pantothenate biosynthesis; (R)-pantoate from 3-methyl-2-oxobutanoate: step 1/2. Catalyzes the reversible reaction in which hydroxymethyl group from 5,10-methylenetetrahydrofolate is transferred onto alpha-ketoisovalerate to form ketopantoate. This chain is 3-methyl-2-oxobutanoate hydroxymethyltransferase, found in Alkalilimnicola ehrlichii (strain ATCC BAA-1101 / DSM 17681 / MLHE-1).